We begin with the raw amino-acid sequence, 116 residues long: Large ribosomal subunit protein bL20 (116 aa).

The protein belongs to the bacterial ribosomal protein bL20 family.

Functionally, binds directly to 23S ribosomal RNA and is necessary for the in vitro assembly process of the 50S ribosomal subunit. It is not involved in the protein synthesizing functions of that subunit. The sequence is that of Large ribosomal subunit protein bL20 from Synechococcus elongatus (strain ATCC 33912 / PCC 7942 / FACHB-805) (Anacystis nidulans R2).